Reading from the N-terminus, the 82-residue chain is KappaPI-actitoxin-Avd3e (82 aa).

Positions 1 to 16 (MVFLLCFFLVADVSYG) are cleaved as a signal peptide. Residues 21–71 (CELPKVVGPCRARFPRYYYNSSSKRCEKFIYGGCGGNANNFHTLEECEKVC) enclose the BPTI/Kunitz inhibitor domain. Intrachain disulfides connect Cys-21/Cys-71, Cys-30/Cys-54, and Cys-46/Cys-67. Residues 76–82 (RDSPKEN) constitute a propeptide that is removed on maturation.

It belongs to the venom Kunitz-type family. Sea anemone type 2 potassium channel toxin subfamily.

Its subcellular location is the secreted. It localises to the nematocyst. In terms of biological role, serine protease inhibitor that inhibits both tissue and plasma kallikreins. Has hemolytic activity. Inhibits voltage-gated potassium channels (Kv). This is KappaPI-actitoxin-Avd3e from Anemonia viridis (Snakelocks anemone).